Here is a 365-residue protein sequence, read N- to C-terminus: Aminomethyltransferase (365 aa).

Belongs to the GcvT family. The glycine cleavage system is composed of four proteins: P, T, L and H.

The enzyme catalyses N(6)-[(R)-S(8)-aminomethyldihydrolipoyl]-L-lysyl-[protein] + (6S)-5,6,7,8-tetrahydrofolate = N(6)-[(R)-dihydrolipoyl]-L-lysyl-[protein] + (6R)-5,10-methylene-5,6,7,8-tetrahydrofolate + NH4(+). Functionally, the glycine cleavage system catalyzes the degradation of glycine. This chain is Aminomethyltransferase, found in Halalkalibacterium halodurans (strain ATCC BAA-125 / DSM 18197 / FERM 7344 / JCM 9153 / C-125) (Bacillus halodurans).